The primary structure comprises 460 residues: Endoglucanase C (460 aa).

The N-terminal stretch at 1–32 (MIKGSSLKRFKSLVMAAIFSVSIISTAIASSA) is a signal peptide. Residue Glu99 is the Proton donor of the active site. Catalysis depends on Asp155, which acts as the Nucleophile. The 61-residue stretch at 400-460 (KPDLKGDVNN…FAQLKVKLLN (61 aa)) folds into the Dockerin domain.

It belongs to the glycosyl hydrolase 8 (cellulase D) family. As to quaternary structure, monomer. There are two forms of the cellulase. The shorter form lacks probably the C-terminal reiterated domains.

It catalyses the reaction Endohydrolysis of (1-&gt;4)-beta-D-glucosidic linkages in cellulose, lichenin and cereal beta-D-glucans.. The protein operates within glycan metabolism; cellulose degradation. In terms of biological role, the biological conversion of cellulose to glucose generally requires three types of hydrolytic enzymes: (1) Endoglucanases which cut internal beta-1,4-glucosidic bonds; (2) Exocellobiohydrolases that cut the disaccharide cellobiose from the non-reducing end of the cellulose polymer chain; (3) Beta-1,4-glucosidases which hydrolyze the cellobiose and other short cello-oligosaccharides to glucose. This Ruminiclostridium cellulolyticum (strain ATCC 35319 / DSM 5812 / JCM 6584 / H10) (Clostridium cellulolyticum) protein is Endoglucanase C (celCCC).